Here is a 172-residue protein sequence, read N- to C-terminus: MSVPGPPSPDGVLAGPPEGLEAGDLTPGLSDTSPDEGLIEDLTIEDKAVEQLAEGLLSHYLPDLQRSKQALQELTQNQVVLLDTLEQEISKFKECHSMLDINALFTEAKHYHAKLVNIRKEMLMLHEKTSKLKKRALKLQQKRQKEELEREQQREKEFEREKQLTAKPAKRT.

Disordered regions lie at residues 1–36 and 135–172; these read MSVP…SPDE and RALK…AKRT. A coiled-coil region spans residues 125-167; the sequence is LHEKTSKLKKRALKLQQKRQKEELEREQQREKEFEREKQLTAK. Basic and acidic residues predominate over residues 143–164; the sequence is RQKEELEREQQREKEFEREKQL.

It belongs to the BLOC1S6 family. Homodimer. Octamer composed of one copy each BLOC1S1, BLOC1S2, BLOC1S3, BLOC1S4, BLOC1S5, BLOC1S6, DTNBP1/BLOC1S7 and SNAPIN/BLOC1S8. The BLOC-1 complex associates with the AP-3 protein complex and membrane protein cargos. Interacts with BLOC1S4, BLOC1S5, DTNBP1/BLOC1S7, F-actin. Component of the biogenesis of lysosome-related organelles complex 1 (BLOC-1) composed of BLOC1S1, BLOC1S2, BLOC1S3, BLOC1S4, BLOC1S5, BLOC1S6, DTNBP1/BLOC1S7 and SNAPIN/BLOC1S8. Interacts with SNAP25, SNAP47 and STX12.

The protein localises to the cytoplasm. The protein resides in the membrane. Its function is as follows. Component of the BLOC-1 complex, a complex that is required for normal biogenesis of lysosome-related organelles (LRO), such as platelet dense granules and melanosomes. In concert with the AP-3 complex, the BLOC-1 complex is required to target membrane protein cargos into vesicles assembled at cell bodies for delivery into neurites and nerve terminals. The BLOC-1 complex, in association with SNARE proteins, is also proposed to be involved in neurite extension. May play a role in intracellular vesicle trafficking, particularly in the vesicle-docking and fusion process. This Bos taurus (Bovine) protein is Biogenesis of lysosome-related organelles complex 1 subunit 6 (BLOC1S6).